Here is a 748-residue protein sequence, read N- to C-terminus: Proton-associated sugar transporter A (748 aa).

6 helical membrane passes run 93–113 (ILFGIEFSYAMETAYVTPVLL), 123–143 (SLVWFISPILGFLLQPLLGAW), 155–175 (RPFILVLAIGALLGLSLLLNG), 191–211 (WGLLLTVCGVVLMDFSADSAD), 233–253 (IHALLAGLGGGFGYVVGGIHW), and 268–288 (VIYLFTAVTLSVTTVLTLVSI). Residues 294–339 (RPPSEKRAAMKSPSLPLPPSPPVLPEEGPGDSLPSHTATNFSSPIS) are disordered. Over residues 308 to 317 (LPLPPSPPVL) the composition is skewed to pro residues. Residue T497 is modified to Phosphothreonine. The next 6 membrane-spanning stretches (helical) occupy residues 533–553 (GWLSFEGMLLFYTDFMGEVVF), 573–593 (VTMGCWGMCIYAFSAAFYSAI), 600–620 (FLSVRTLYFIAYLAFGLGTGL), 627–647 (LYVVLSLCITYGILFSTLCTL), 685–705 (FLAQILVSLVLGPLTSAVGSA), and 708–728 (VMYFSSLVSFLGCLYSSLFVI).

It belongs to the glycoside-pentoside-hexuronide (GPH) cation symporter transporter (TC 2.A.2) family. Expressed in adult heart, brain, muscle and kidney, with very strong expression in brain. Also expressed in fetal brain, kidney and lung.

The protein localises to the membrane. It carries out the reaction D-galactose(in) + H(+)(in) = D-galactose(out) + H(+)(out). The catalysed reaction is D-glucose(out) + H(+)(out) = D-glucose(in) + H(+)(in). In terms of biological role, proton-associated glucose transporter in the brain. The chain is Proton-associated sugar transporter A from Homo sapiens (Human).